Reading from the N-terminus, the 384-residue chain is 4-coumarate--CoA ligase (384 aa).

This sequence belongs to the ATP-dependent AMP-binding enzyme family.

The catalysed reaction is (E)-4-coumarate + ATP + CoA = (E)-4-coumaroyl-CoA + AMP + diphosphate. In terms of biological role, converts p-coumaric acid into p-coumaryl CoA. This is necessary for the activation of the photoactive yellow protein (PYP) chromophore. In Rhodobacter capsulatus (strain ATCC BAA-309 / NBRC 16581 / SB1003), this protein is 4-coumarate--CoA ligase (pcl).